Here is a 650-residue protein sequence, read N- to C-terminus: Aminopeptidase B (650 aa).

Serine 7 is subject to Phosphoserine. 298–302 (GGMEN) lines the substrate pocket. Histidine 325 is a Zn(2+) binding site. Glutamate 326 functions as the Proton acceptor in the catalytic mechanism. Zn(2+) is bound by residues histidine 329 and glutamate 348. Residue lysine 446 is modified to N6-acetyllysine.

This sequence belongs to the peptidase M1 family. In terms of assembly, monomer. Requires Zn(2+) as cofactor. As to expression, widely expressed.

Its subcellular location is the secreted. The enzyme catalyses Release of N-terminal Arg and Lys from oligopeptides when P1' is not Pro. Also acts on arylamides of Arg and Lys.. In terms of biological role, exopeptidase which selectively removes arginine and/or lysine residues from the N-terminus of several peptide substrates including Arg(0)-Leu-enkephalin, Arg(0)-Met-enkephalin and Arg(-1)-Lys(0)-somatostatin-14. Can hydrolyze leukotriene A4 (LTA-4) into leukotriene B4 (LTB-4). The protein is Aminopeptidase B (Rnpep) of Rattus norvegicus (Rat).